The primary structure comprises 434 residues: A-adding tRNA nucleotidyltransferase (434 aa).

20 to 23 lines the ATP pocket; the sequence is GAVR. The Mg(2+) site is built by Asp33 and Asp35. Residues 91–92, Asn96, 132–141, and Arg177 each bind ATP; these read RD and DPLRAWRAAR. Residues 227 to 339 enclose the HD domain; sequence VFEHGVEALH…ELLPDLLSLM (113 aa).

Belongs to the tRNA nucleotidyltransferase/poly(A) polymerase family. Requires Mg(2+) as cofactor.

It carries out the reaction a tRNA with a 3' CC end + ATP = a tRNA with a 3' CCA end + diphosphate. Its function is as follows. tRNA nucleotidyltransferase involved in the synthesis of the tRNA CCA terminus. Adds the terminal adenosine residue to tRNA. The polypeptide is A-adding tRNA nucleotidyltransferase (Deinococcus radiodurans (strain ATCC 13939 / DSM 20539 / JCM 16871 / CCUG 27074 / LMG 4051 / NBRC 15346 / NCIMB 9279 / VKM B-1422 / R1)).